Here is a 176-residue protein sequence, read N- to C-terminus: Crossover junction endodeoxyribonuclease RuvC (176 aa).

Catalysis depends on residues Asp-10, Glu-69, and Asp-141. Residues Asp-10, Glu-69, and Asp-141 each contribute to the Mg(2+) site.

The protein belongs to the RuvC family. In terms of assembly, homodimer which binds Holliday junction (HJ) DNA. The HJ becomes 2-fold symmetrical on binding to RuvC with unstacked arms; it has a different conformation from HJ DNA in complex with RuvA. In the full resolvosome a probable DNA-RuvA(4)-RuvB(12)-RuvC(2) complex forms which resolves the HJ. It depends on Mg(2+) as a cofactor.

It is found in the cytoplasm. The catalysed reaction is Endonucleolytic cleavage at a junction such as a reciprocal single-stranded crossover between two homologous DNA duplexes (Holliday junction).. The RuvA-RuvB-RuvC complex processes Holliday junction (HJ) DNA during genetic recombination and DNA repair. Endonuclease that resolves HJ intermediates. Cleaves cruciform DNA by making single-stranded nicks across the HJ at symmetrical positions within the homologous arms, yielding a 5'-phosphate and a 3'-hydroxyl group; requires a central core of homology in the junction. The consensus cleavage sequence is 5'-(A/T)TT(C/G)-3'. Cleavage occurs on the 3'-side of the TT dinucleotide at the point of strand exchange. HJ branch migration catalyzed by RuvA-RuvB allows RuvC to scan DNA until it finds its consensus sequence, where it cleaves and resolves the cruciform DNA. The sequence is that of Crossover junction endodeoxyribonuclease RuvC from Dichelobacter nodosus (strain VCS1703A).